A 505-amino-acid polypeptide reads, in one-letter code: Flagellin (505 aa).

Belongs to the bacterial flagellin family.

The protein localises to the secreted. It localises to the bacterial flagellum. In terms of biological role, flagellin is the subunit protein which polymerizes to form the filaments of bacterial flagella. This Salmonella moscow protein is Flagellin (fliC).